The primary structure comprises 366 residues: 3-dehydroquinate synthase (366 aa).

Residues 107-111 (GVIGD), 131-132 (TT), Lys-144, and Lys-153 each bind NAD(+). 3 residues coordinate Zn(2+): Glu-186, His-251, and His-268.

This sequence belongs to the sugar phosphate cyclases superfamily. Dehydroquinate synthase family. Co(2+) serves as cofactor. Zn(2+) is required as a cofactor. Requires NAD(+) as cofactor.

The protein localises to the cytoplasm. The catalysed reaction is 7-phospho-2-dehydro-3-deoxy-D-arabino-heptonate = 3-dehydroquinate + phosphate. It participates in metabolic intermediate biosynthesis; chorismate biosynthesis; chorismate from D-erythrose 4-phosphate and phosphoenolpyruvate: step 2/7. Its function is as follows. Catalyzes the conversion of 3-deoxy-D-arabino-heptulosonate 7-phosphate (DAHP) to dehydroquinate (DHQ). The sequence is that of 3-dehydroquinate synthase from Microcystis aeruginosa (strain NIES-843 / IAM M-2473).